We begin with the raw amino-acid sequence, 322 residues long: MQITFLGTSSGVPTRARNVSSVALRLPQRAELWLFDCGEGTQHQILRSDLKVSQLSRIFITHLHGDHIFGLMGLLASCGLAGNVQRVDIYGPSGLNDYIQSASRYSHTHFSYPIKVHTVRPGVIYENDEFTVTCGLLHHRITAFGYRVAEKDRAGRFDIEKAKELQIPPGRIYGQLKRGETVTLEDGRVINGAELCGPTEIGRKMAYCTDTIYCDGAVELAQDADVLIHEATFAHQDSEMAFQRLHSTTTMAAQTALAAGVRRLLMTHFSPRYAPGNTIELKDLLQEARAIFPRTDMAYDFMTYEVPRRREPVFSSVSSSSV.

His62, His64, Asp66, His67, His139, Asp210, and His268 together coordinate Zn(2+). The active-site Proton acceptor is Asp66.

This sequence belongs to the RNase Z family. In terms of assembly, homodimer. Zn(2+) is required as a cofactor.

The catalysed reaction is Endonucleolytic cleavage of RNA, removing extra 3' nucleotides from tRNA precursor, generating 3' termini of tRNAs. A 3'-hydroxy group is left at the tRNA terminus and a 5'-phosphoryl group is left at the trailer molecule.. Zinc phosphodiesterase, which displays some tRNA 3'-processing endonuclease activity. Probably involved in tRNA maturation, by removing a 3'-trailer from precursor tRNA. The protein is Ribonuclease Z of Nostoc sp. (strain PCC 7120 / SAG 25.82 / UTEX 2576).